Consider the following 299-residue polypeptide: Bifunctional protein FolD (299 aa).

NADP(+) is bound by residues 168 to 170, Ser193, and Ile234; that span reads GRS.

It belongs to the tetrahydrofolate dehydrogenase/cyclohydrolase family. In terms of assembly, homodimer.

The enzyme catalyses (6R)-5,10-methylene-5,6,7,8-tetrahydrofolate + NADP(+) = (6R)-5,10-methenyltetrahydrofolate + NADPH. It catalyses the reaction (6R)-5,10-methenyltetrahydrofolate + H2O = (6R)-10-formyltetrahydrofolate + H(+). Its pathway is one-carbon metabolism; tetrahydrofolate interconversion. Functionally, catalyzes the oxidation of 5,10-methylenetetrahydrofolate to 5,10-methenyltetrahydrofolate and then the hydrolysis of 5,10-methenyltetrahydrofolate to 10-formyltetrahydrofolate. This is Bifunctional protein FolD from Brucella abortus (strain S19).